A 1781-amino-acid chain; its full sequence is MTTYRAIPSDGVDLAASCGARVGDVLPGPHTGDYAPLGFWAQNGSMSQPLGESPATATATATATTRPSPTTPAMPKMGVRARVADWPPKREALREHSNPSPSQDTDGTKATKMAHSMRSIQNGQPPTSTPASSGSKAFHRLSRRRSKDVEFQDGWPRSPGRAFLPLRHRSSSEITLSECDAEDAGEPRGARHTGALPLFREYGSTSSIDVQGMPEQSFFDILNEFRSEQPDARGCQALTELLRADPGPHLMGGGGGAKGDSHNGQPAKDSLLPLQPTKEKEKARKKPARGLGGGDTVDSSIFRKLRSSKPEGEAGRSPGEADEGRSPPEASRPWVCQKSFAHFDVQSMLFDLNEAAANRVSVSQRRNTTTGASAASAASAMASLTASRAHSLGGLDPAFTSTEDLNCKENLEQDLGDDNSNDLLLSCPHFRNEIGGECERNVSFSRASVGSPSSGEGHLAEPALSAYRTNASISVLEVPKEQQRTQSRPRQYSIEHVDLGARYYQDYFVGKEHANYFGVDEKLGPVAVSIKREKLEDHKEHGPQYQYRIIFRTRELITLRGSILEDATPTATKHGTGRGLPLKDALEYVIPELNIHCLRLALNTPKVTEQLLKLDEQGLCRKHKVGILYCKAGQSSEEEMYNNEEAGPAFEEFLSLIGEKVCLKGFTKYAAQLDVKTDSTGTHSLYTMYQDYEIMFHVSTLLPYTPNNRQQLLRKRHIGNDIVTIIFQEPGALPFTPKNIRSHFQHVFIIVRVHNPCTDNVCYSMAVTRSKDAPPFGPPIPSGTTFRKSDVFRDFLLAKVINAENAAHKSDKFHTMATRTRQEYLKDLAENCVSNTPIDSTGKFNLISLTSKKKEKTKARAGAEQHSAGAIAWRVVAQDYAQGVEIDCILGISNEFVVLLDLRTKEVVFNCYCGDVIGWTPDSSTLKIFYGRGDHIFLQATEGSVEDIREIVQRLKVMTSGWETVDMTLRRNGLGQLGFHVKYDGTVAEVEDYGFAWQAGLRQGSRLVEICKVAVVTLTHDQMIDLLRTSVTVKVVIIPPFEDGTPRRGWPETYDMNTSEPKTEQESITPGGRPPYRSNAPWQWSGPASHNSLPASKWATPTTPGHAQSLSRPLKQTPIVPFRESQPLHSKRPVSFPETPYTVSPAGADRVPPYRQPSGSFSTPGSATYVRYKPSPERYTAAPHPLLSLDPHFSHDGTSSGDSSSGGLTSQESTMERQKPEPLWHVPAQARLSAIAGSSGNKHPSRQDAAGKDSPNRHSKGEPQYSSHSSSNTLSSNASSSHSDDRWFDPLDPLEPEQDPLSKGGSSDSGIDTTLYTSSPSCMSLAKAPRPAKPHKPPGSMGLCGGGREAAGRSHHADRRREVSPAPAVAGQSKGYRPKLYSSGSSTPTGLAGGSRDPPRQPSDMGSRVGYPAQVYKTASAETPRPSQLAQPSPFQLSASVPKSFFSKQPVRNKHPTGWKRTEEPPPRPLPFSDPKKQVDTNTKNVFGQPRLRASLRDLRSPRKNYKSTIEDDLKKLIIMDNLGPEQERDTGQSPQKGLQRTLSDESLCSGRREPSFASPAGLEPGLPSDVLFTSTCAFPSSTLPARRQHQHPHPPVGPGATPAAGSGFPEKKSTISASELSLADGRDRPLRRLDPGLMPLPDTAAGLEWSSLVNAAKAYEVQRAVSLFSLNDPALSPDIPPAHSPVHSHLSLERGPPTPRTTPTMSEEPPLDLTGKVYQLEVMLKQLHTDLQKEKQDKVVLQSEVASLRQNNQRLQEESQAASEQLRKFAEIFCREKKEL.

Disordered regions lie at residues 45–166 and 239–332; these read SMSQ…FLPL and TELL…EASR. Residues 54 to 73 are compositionally biased toward low complexity; sequence PATATATATATTRPSPTTPA. The segment covering 87 to 97 has biased composition (basic and acidic residues); sequence PPKREALREHS. Ser100 carries the phosphoserine modification. Over residues 118 to 135 the composition is skewed to polar residues; the sequence is RSIQNGQPPTSTPASSGS. Residues 137–146 are compositionally biased toward basic residues; that stretch reads AFHRLSRRRS. Ser146 bears the Phosphoserine mark. Phosphoserine is present on Ser401. The 218-residue stretch at 611 to 828 folds into the Rap-GAP domain; sequence LLKLDEQGLC…RTRQEYLKDL (218 aa). One can recognise a PDZ domain in the interval 966–1042; sequence DMTLRRNGLG…VKVVIIPPFE (77 aa). 4 disordered regions span residues 1046 to 1112, 1124 to 1221, 1236 to 1565, and 1583 to 1636; these read PRRG…SLSR, ESQP…QKPE, AGSS…GLEP, and TLPA…RLDP. Polar residues-rich tracts occupy residues 1080-1111 and 1157-1166; these read APWQWSGPASHNSLPASKWATPTTPGHAQSLS and PSGSFSTPGS. Low complexity predominate over residues 1196 to 1210; it reads DGTSSGDSSSGGLTS. Residues 1245 to 1261 are compositionally biased toward basic and acidic residues; the sequence is SRQDAAGKDSPNRHSKG. A compositionally biased stretch (low complexity) spans 1266–1281; the sequence is SSHSSSNTLSSNASSS. Over residues 1304 to 1322 the composition is skewed to polar residues; that stretch reads GGSSDSGIDTTLYTSSPSC. At Ser1364 the chain carries Phosphoserine. Thr1387 bears the Phosphothreonine mark. Positions 1425–1441 are enriched in polar residues; the sequence is RPSQLAQPSPFQLSASV. N6-acetyllysine is present on Lys1448. Positions 1509-1518 are enriched in basic and acidic residues; it reads TIEDDLKKLI. Over residues 1532-1547 the composition is skewed to polar residues; the sequence is GQSPQKGLQRTLSDES. Phosphoserine is present on residues Ser1544 and Ser1547. A compositionally biased stretch (low complexity) spans 1599-1609; sequence PGATPAAGSGF. A phosphoserine mark is found at Ser1619 and Ser1622. Positions 1625-1635 are enriched in basic and acidic residues; sequence DGRDRPLRRLD. A Phosphoserine modification is found at Ser1677. The interval 1685–1712 is disordered; that stretch reads SPVHSHLSLERGPPTPRTTPTMSEEPPL. Residues Thr1699 and Thr1703 each carry the phosphothreonine modification. Residues 1720–1774 adopt a coiled-coil conformation; it reads QLEVMLKQLHTDLQKEKQDKVVLQSEVASLRQNNQRLQEESQAASEQLRKFAEIF.

The protein localises to the apical cell membrane. Functionally, plays a critical role in epithelial cell morphogenesis, polarity, adhesion and cytoskeletal organization in the lens. This is Signal-induced proliferation-associated 1-like protein 3 (SIPA1L3) from Homo sapiens (Human).